Here is a 288-residue protein sequence, read N- to C-terminus: Sulfur carrier protein FdhD (288 aa).

The Cysteine persulfide intermediate role is filled by C122. 268-273 (FVRGER) is a Mo-bis(molybdopterin guanine dinucleotide) binding site.

The protein belongs to the FdhD family.

It localises to the cytoplasm. In terms of biological role, required for formate dehydrogenase (FDH) activity. Acts as a sulfur carrier protein that transfers sulfur from IscS to the molybdenum cofactor prior to its insertion into FDH. The chain is Sulfur carrier protein FdhD from Anaeromyxobacter dehalogenans (strain 2CP-1 / ATCC BAA-258).